A 1238-amino-acid polypeptide reads, in one-letter code: ATP-dependent helicase/nuclease subunit A (1238 aa).

The UvrD-like helicase ATP-binding domain occupies 12–490; sequence VSWTDDQWKA…IDLNANFRSR (479 aa). 33 to 40 lines the ATP pocket; sequence AAAGSGKT. Residues 510–818 form the UvrD-like helicase C-terminal domain; that stretch reads GEILYDDNAS…RLVTIHSSKG (309 aa).

It belongs to the helicase family. AddA subfamily. In terms of assembly, heterodimer of AddA and AddB/RexB. Mg(2+) serves as cofactor.

It catalyses the reaction Couples ATP hydrolysis with the unwinding of duplex DNA by translocating in the 3'-5' direction.. It carries out the reaction ATP + H2O = ADP + phosphate + H(+). In terms of biological role, the heterodimer acts as both an ATP-dependent DNA helicase and an ATP-dependent, dual-direction single-stranded exonuclease. Recognizes the chi site generating a DNA molecule suitable for the initiation of homologous recombination. The AddA nuclease domain is required for chi fragment generation; this subunit has the helicase and 3' -&gt; 5' nuclease activities. The protein is ATP-dependent helicase/nuclease subunit A of Lysinibacillus sphaericus (strain C3-41).